We begin with the raw amino-acid sequence, 561 residues long: uncharacterized protein (561 aa).

The span at Met-1–Lys-11 shows a compositional bias: polar residues. 2 disordered regions span residues Met-1 to Arg-22 and Cys-522 to Pro-561. Low complexity predominate over residues Gln-541 to Pro-561.

To Synechocystis PCC 6803 sll0335 and to M.tuberculosis Rv2567.

This is an uncharacterized protein from Mycobacterium leprae (strain TN).